A 54-amino-acid polypeptide reads, in one-letter code: Large ribosomal subunit protein bL32 (54 aa).

Positions 1-54 are disordered; the sequence is MAVQQNRKTRSRRGMRRSHDALTAAQLSVDSTSGETHRRHHVTADGYYRGKKVI. Over residues 7–16 the composition is skewed to basic residues; it reads RKTRSRRGMR. Polar residues predominate over residues 25–34; sequence AQLSVDSTSG.

The protein belongs to the bacterial ribosomal protein bL32 family.

This chain is Large ribosomal subunit protein bL32, found in Tolumonas auensis (strain DSM 9187 / NBRC 110442 / TA 4).